We begin with the raw amino-acid sequence, 360 residues long: Phenylalanine--tRNA ligase alpha subunit (360 aa).

Mg(2+) is bound at residue Glu260.

It belongs to the class-II aminoacyl-tRNA synthetase family. Phe-tRNA synthetase alpha subunit type 1 subfamily. Tetramer of two alpha and two beta subunits. The cofactor is Mg(2+).

It is found in the cytoplasm. The catalysed reaction is tRNA(Phe) + L-phenylalanine + ATP = L-phenylalanyl-tRNA(Phe) + AMP + diphosphate + H(+). The sequence is that of Phenylalanine--tRNA ligase alpha subunit from Sinorhizobium medicae (strain WSM419) (Ensifer medicae).